The sequence spans 211 residues: Pyridoxine/pyridoxamine 5'-phosphate oxidase (211 aa).

Residues 7 to 10 (RRDY) and Lys-65 contribute to the substrate site. Residues 60-65 (RIVLLK), 75-76 (YT), Arg-81, Lys-82, and Gln-104 each bind FMN. Residues Tyr-122, Arg-126, and Ser-130 each contribute to the substrate site. Residues 139–140 (QS) and Trp-184 contribute to the FMN site. 190–192 (RLH) contributes to the substrate binding site. An FMN-binding site is contributed by Arg-194.

The protein belongs to the pyridoxamine 5'-phosphate oxidase family. As to quaternary structure, homodimer. FMN serves as cofactor.

The catalysed reaction is pyridoxamine 5'-phosphate + O2 + H2O = pyridoxal 5'-phosphate + H2O2 + NH4(+). It carries out the reaction pyridoxine 5'-phosphate + O2 = pyridoxal 5'-phosphate + H2O2. Its pathway is cofactor metabolism; pyridoxal 5'-phosphate salvage; pyridoxal 5'-phosphate from pyridoxamine 5'-phosphate: step 1/1. It functions in the pathway cofactor metabolism; pyridoxal 5'-phosphate salvage; pyridoxal 5'-phosphate from pyridoxine 5'-phosphate: step 1/1. Functionally, catalyzes the oxidation of either pyridoxine 5'-phosphate (PNP) or pyridoxamine 5'-phosphate (PMP) into pyridoxal 5'-phosphate (PLP). The chain is Pyridoxine/pyridoxamine 5'-phosphate oxidase from Aliivibrio salmonicida (strain LFI1238) (Vibrio salmonicida (strain LFI1238)).